A 407-amino-acid chain; its full sequence is Sensor histidine kinase YdfH (407 aa).

Residues 1-25 (MLIRNPFKDKYYSHDRRALNMLALR) lie on the Cytoplasmic side of the membrane. 2 consecutive transmembrane segments (helical) span residues 26 to 46 (VPGLAFILMIYIASIVLQFVS) and 47 to 67 (GGWSILLLYAFTILIAIFALL). The Cytoplasmic segment spans residues 68 to 78 (HWHSYRWVKKR). The next 2 membrane-spanning stretches (helical) occupy residues 79-99 (VILYFAVQGLITFALANLMTG) and 100-120 (FFILVIIGLYAFLIGQIIGMA). Over 121–125 (DRRRT) the chain is Cytoplasmic. A helical membrane pass occupies residues 126-146 (FLILYLLLLLVINSAYHLHKG). The Extracellular portion of the chain corresponds to 147–150 (EVLH). Residues 151–171 (FIVIAAPIMIVIITYAATFFA) form a helical membrane-spanning segment. Topologically, residues 172–407 (QVDEKIKAQL…VPIQGEMQDE (236 aa)) are cytoplasmic. The Histidine kinase domain occupies 201–402 (ERQRMARDLH…QIEITVPIQG (202 aa)). H210 is subject to Phosphohistidine; by autocatalysis.

Its subcellular location is the cell membrane. The catalysed reaction is ATP + protein L-histidine = ADP + protein N-phospho-L-histidine.. Its function is as follows. Member of the two-component regulatory system YdfH/YdfI. May activate YdfI by phosphorylation. This chain is Sensor histidine kinase YdfH (ydfH), found in Bacillus subtilis (strain 168).